We begin with the raw amino-acid sequence, 236 residues long: tRNA (guanine-N(7)-)-methyltransferase (236 aa).

Residues 1–23 (MEADVQRAQQAQLEKGSSVPPWT) form a disordered region. Residues Asp69, Glu94, Asn121, and Asp144 each contribute to the S-adenosyl-L-methionine site. The active site involves Asp144. Residues Lys148 and Asp180 each coordinate substrate.

This sequence belongs to the class I-like SAM-binding methyltransferase superfamily. TrmB family.

It catalyses the reaction guanosine(46) in tRNA + S-adenosyl-L-methionine = N(7)-methylguanosine(46) in tRNA + S-adenosyl-L-homocysteine. The protein operates within tRNA modification; N(7)-methylguanine-tRNA biosynthesis. Catalyzes the formation of N(7)-methylguanine at position 46 (m7G46) in tRNA. This Synechococcus sp. (strain JA-3-3Ab) (Cyanobacteria bacterium Yellowstone A-Prime) protein is tRNA (guanine-N(7)-)-methyltransferase.